Consider the following 181-residue polypeptide: Crustacyanin-C1 subunit (181 aa).

Intrachain disulfides connect C12/C121, C51/C173, and C117/C150.

Belongs to the calycin superfamily. Lipocalin family. Oligomer; Can form dimers (beta-crustacyanin); or complexes of 16 subunits (alpha-crustacyanin). There are five types of subunits: A1, A2, A3, C1 and C2. Found in the carapace.

It is found in the secreted. The protein resides in the extracellular space. Functionally, binds the carotenoid astaxanthin (AXT) which provides the blue coloration to the carapace of the lobster. In Homarus gammarus (European lobster), this protein is Crustacyanin-C1 subunit.